Here is a 185-residue protein sequence, read N- to C-terminus: Putative lipoprotein LprB (185 aa).

The first 24 residues, 1 to 24 (MRRKVRRLTLAVSALVALFPAVAG), serve as a signal peptide directing secretion. The N-palmitoyl cysteine moiety is linked to residue Cys-25. The S-diacylglycerol cysteine moiety is linked to residue Cys-25. Residues 26-50 (SDSGDNKPGATIPSTPANAEGRHGP) are disordered.

It is found in the cell membrane. This is Putative lipoprotein LprB (lprB) from Mycobacterium tuberculosis (strain CDC 1551 / Oshkosh).